The chain runs to 27 residues: Delta-conotoxin TxVIB (27 aa).

3 disulfide bridges follow: Cys-2/Cys-17, Cys-9/Cys-21, and Cys-16/Cys-26.

The protein belongs to the conotoxin O1 superfamily. In terms of tissue distribution, expressed by the venom duct.

It localises to the secreted. Its function is as follows. Delta-conotoxins bind to site 6 of voltage-gated sodium channels (Nav) and inhibit the inactivation process. Induces membrane depolarization and spontaneous repetitive firing of neurons. This is Delta-conotoxin TxVIB from Conus textile (Cloth-of-gold cone).